A 220-amino-acid chain; its full sequence is Large ribosomal subunit protein bL25 (220 aa).

Belongs to the bacterial ribosomal protein bL25 family. CTC subfamily. In terms of assembly, part of the 50S ribosomal subunit; part of the 5S rRNA/L5/L18/L25 subcomplex. Contacts the 5S rRNA. Binds to the 5S rRNA independently of L5 and L18.

Functionally, this is one of the proteins that binds to the 5S RNA in the ribosome where it forms part of the central protuberance. The chain is Large ribosomal subunit protein bL25 from Zymomonas mobilis subsp. mobilis (strain ATCC 31821 / ZM4 / CP4).